We begin with the raw amino-acid sequence, 255 residues long: 1-(5-phosphoribosyl)-5-[(5-phosphoribosylamino)methylideneamino] imidazole-4-carboxamide isomerase (255 aa).

The active-site Proton acceptor is the D8. D129 acts as the Proton donor in catalysis.

It belongs to the HisA/HisF family.

The protein localises to the cytoplasm. It carries out the reaction 1-(5-phospho-beta-D-ribosyl)-5-[(5-phospho-beta-D-ribosylamino)methylideneamino]imidazole-4-carboxamide = 5-[(5-phospho-1-deoxy-D-ribulos-1-ylimino)methylamino]-1-(5-phospho-beta-D-ribosyl)imidazole-4-carboxamide. It participates in amino-acid biosynthesis; L-histidine biosynthesis; L-histidine from 5-phospho-alpha-D-ribose 1-diphosphate: step 4/9. The chain is 1-(5-phosphoribosyl)-5-[(5-phosphoribosylamino)methylideneamino] imidazole-4-carboxamide isomerase from Prochlorococcus marinus (strain MIT 9515).